Here is a 327-residue protein sequence, read N- to C-terminus: Phage tubulin-like protein (327 aa).

GTP contacts are provided by residues Gly-14 to Ala-15 and Ala-107 to Gly-109. The segment at Lys-303 to Asp-327 is disordered. Polar residues predominate over residues Gln-318–Asp-327.

It belongs to the FtsZ family. PhuZ subfamily. As to quaternary structure, homomultimer. Polymerizes in a strictly GTP-dependent manner.

The protein resides in the host cytoplasm. It carries out the reaction GTP + H2O = GDP + phosphate + H(+). The non-hydrolyzable GTP analog GMPCPP stabilizes filaments, which never disassemble. Its function is as follows. A tubulin-like GTPase that forms filaments, which are required for positioning viral DNA and capsids in the middle of the host cell for optimal replication. The motor component of a partition system which pushes phage DNA (encased by protein gp105) to the center of the bacterial host cell. Also required for movement of phage capsids to the vicinity of the viral DNA and rotation of the encased viral DNA at midcell. Forms filaments during the lytic phase, which position phage DNA at the center of the bacterial host cell. Filaments have a three-stranded intertwined architecture and form a spindle-like cytoskeleton within the infected cell. Has GTPase activity. Filaments grow at the plus end and depolymerize at the minus end, a process called treadmilling, and switch from growing in a polar manner to catastrophic depolymerization, i.e. they display dynamic instability, like tubulin. In infected host cells the filament ends close to the cell pole are relatively stable, while the other end near the phage DNA is highly dynamic. Both capsid movement and DNA rotation probably require treadmilling. In Pseudomonas phage phiKZ, this protein is Phage tubulin-like protein.